The primary structure comprises 283 residues: uncharacterized protein (283 aa).

A compositionally biased stretch (polar residues) spans M1–L10. Disordered stretches follow at residues M1–S99 and D255–I283. Basic and acidic residues-rich tracts occupy residues K14–R34, S42–P53, and E61–V71.

The protein belongs to the chlamydial CPn_0705/CT_671/TC_0042 family.

This is an uncharacterized protein from Chlamydia trachomatis serovar D (strain ATCC VR-885 / DSM 19411 / UW-3/Cx).